The sequence spans 240 residues: tRNA1(Val) (adenine(37)-N6)-methyltransferase (240 aa).

This sequence belongs to the methyltransferase superfamily. tRNA (adenine-N(6)-)-methyltransferase family.

Its subcellular location is the cytoplasm. The enzyme catalyses adenosine(37) in tRNA1(Val) + S-adenosyl-L-methionine = N(6)-methyladenosine(37) in tRNA1(Val) + S-adenosyl-L-homocysteine + H(+). In terms of biological role, specifically methylates the adenine in position 37 of tRNA(1)(Val) (anticodon cmo5UAC). This is tRNA1(Val) (adenine(37)-N6)-methyltransferase from Dyadobacter fermentans (strain ATCC 700827 / DSM 18053 / CIP 107007 / KCTC 52180 / NS114).